Consider the following 102-residue polypeptide: MSHTILLVQQQVKKPESRVWADYETLNQCLEGVCKIYEEQLKQQNPTAPTITYDISQLFKFIDQLADLSCLEFHPATGTYVPHTKDWIKENIYALLRNQAGQ.

The protein belongs to the E(R) family. As to quaternary structure, homodimer.

Functionally, may have a role in the cell cycle. The polypeptide is Enhancer of rudimentary homolog (ERH) (Taenia solium (Pork tapeworm)).